A 99-amino-acid polypeptide reads, in one-letter code: Class II hydrophobin 3 (99 aa).

An N-terminal signal peptide occupies residues 1–18 (MRIDILATAALLAQLASA). 3 cysteine pairs are disulfide-bonded: Cys-31–Cys-79, Cys-40–Cys-70, and Cys-41–Cys-53.

It belongs to the cerato-ulmin hydrophobin family. As to quaternary structure, homodimer. Homodimers further self-assemble to form highly ordered films at water-air interfaces through intermolecular interactions.

It is found in the secreted. Its subcellular location is the cell wall. Its function is as follows. Aerial growth, conidiation, and dispersal of filamentous fungi in the environment rely upon a capability of their secreting small amphipathic proteins called hydrophobins (HPBs) with low sequence identity. Class I can self-assemble into an outermost layer of rodlet bundles on aerial cell surfaces, conferring cellular hydrophobicity that supports fungal growth, development and dispersal; whereas Class II form highly ordered films at water-air interfaces through intermolecular interactions but contribute nothing to the rodlet structure. Hyd3 is a class II hydrophobin required for barley root colonization. Hyd1 and Hyd3 are jointly required for conidial hydrophobicity and dispersal, but seem not to be involved in mycelia hydrophobicity. Inhibits conidial germination in environments not suitable for mycelial growth. Plays probably a role in intraspecific signaling or hyphal fusion. This is Class II hydrophobin 3 from Bionectria ochroleuca (Gliocladium roseum).